Here is a 211-residue protein sequence, read N- to C-terminus: MYLDLTEKQVLILEFIKSQIILKGYPPAVREICTAVGLRSTSTVHSHLNKLEKLGYIRKDPTKPRAIEVLERSKVNDVSGANQEIIELPLVGQITAGEPILAQQNIEEYIPFPASLVKGSNNFVLRVKGESMINAGILDEDYVVVDKKNTALNSQIVVALINGESATVKRFFKEGNLIRLQPENDFMEPIMLNDSEVEIVGIVTGVFRVIK.

A DNA-binding region (H-T-H motif) is located at residues valine 29–asparagine 49. Catalysis depends on for autocatalytic cleavage activity residues serine 131 and lysine 169.

The protein belongs to the peptidase S24 family. As to quaternary structure, homodimer.

The enzyme catalyses Hydrolysis of Ala-|-Gly bond in repressor LexA.. Represses a number of genes involved in the response to DNA damage (SOS response), including recA and lexA. In the presence of single-stranded DNA, RecA interacts with LexA causing an autocatalytic cleavage which disrupts the DNA-binding part of LexA, leading to derepression of the SOS regulon and eventually DNA repair. The polypeptide is LexA repressor (Clostridioides difficile (strain 630) (Peptoclostridium difficile)).